The following is a 293-amino-acid chain: Prohibitin-2 (293 aa).

Residues 21–41 (FGGGFGLLALGGVGLLALSSL) traverse the membrane as a helical; Signal-anchor for type II membrane protein segment. The stretch at 190–235 (GREYAAAIEAKQVAQQEAERARFLVEKALQDKRSIIVKAEGEAQSA) forms a coiled coil.

It belongs to the prohibitin family. As to quaternary structure, the mitochondrial prohibitin complex consists of two subunits (PHB1 and PHB2), assembled into a membrane-associated ring-shaped supercomplex of approximately 1 mDa.

Its subcellular location is the mitochondrion inner membrane. It localises to the cytoplasm. It is found in the nucleus. The protein resides in the cell membrane. Its function is as follows. Protein with pleiotropic attributes mediated in a cell-compartment- and tissue-specific manner, which include the plasma membrane-associated cell signaling functions, mitochondrial chaperone, and transcriptional co-regulator of transcription factors and sex steroid hormones in the nucleus. In terms of biological role, in the mitochondria, together with PHB, forms large ring complexes (prohibitin complexes) in the inner mitochondrial membrane (IMM) and functions as a chaperone protein that stabilizes mitochondrial respiratory enzymes and maintains mitochondrial integrity in the IMM, which is required for mitochondrial morphogenesis, neuronal survival, and normal lifespan. Functionally, in the nucleus, serves as transcriptional co-regulator. This Dictyostelium discoideum (Social amoeba) protein is Prohibitin-2 (phbB).